We begin with the raw amino-acid sequence, 566 residues long: Hemagglutinin (566 aa).

A signal peptide spans 1-17; that stretch reads MKAKLLVLLCALSATDA. Topologically, residues 18–529 are extracellular; sequence DTICIGYHAN…VKLESMGVYQ (512 aa). Cystine bridges form between Cys-21-Cys-481, Cys-59-Cys-292, Cys-72-Cys-84, Cys-107-Cys-153, Cys-296-Cys-320, and Cys-488-Cys-492. N-linked (GlcNAc...) asparagine; by host glycosylation is found at Asn-27, Asn-28, and Asn-40. N-linked (GlcNAc...) asparagine; by host glycans are attached at residues Asn-104, Asn-144, Asn-172, Asn-177, Asn-286, and Asn-304. Residue Asn-498 is glycosylated (N-linked (GlcNAc...) asparagine; by host). A helical membrane pass occupies residues 530 to 550; it reads ILAIYSTVASSLCLLVSLGAI. At 551–566 the chain is on the cytoplasmic side; it reads SFWMCSNGSLQCRICI. S-palmitoyl cysteine; by host attachment occurs at residues Cys-555, Cys-562, and Cys-565.

Belongs to the influenza viruses hemagglutinin family. As to quaternary structure, homotrimer of disulfide-linked HA1-HA2. Interacts with human CACNA1C. In terms of processing, palmitoylated. Post-translationally, in natural infection, inactive HA is matured into HA1 and HA2 outside the cell by one or more trypsin-like, arginine-specific endoprotease secreted by the bronchial epithelial cells. One identified protease that may be involved in this process is secreted in lungs by club cells.

Its subcellular location is the virion membrane. It localises to the host apical cell membrane. Binds to sialic acid-containing receptors on the cell surface, bringing about the attachment of the virus particle to the cell. This attachment induces virion internalization of about two third of the virus particles through clathrin-dependent endocytosis and about one third through a clathrin- and caveolin-independent pathway. Plays a major role in the determination of host range restriction and virulence. Class I viral fusion protein. Responsible for penetration of the virus into the cell cytoplasm by mediating the fusion of the membrane of the endocytosed virus particle with the endosomal membrane. Low pH in endosomes induces an irreversible conformational change in HA2, releasing the fusion hydrophobic peptide. Several trimers are required to form a competent fusion pore. Functionally, binds to sialic acid-containing receptors on the cell surface, bringing about the attachment of the virus particle to the cell. This attachment induces virion internalization either through clathrin-dependent endocytosis or through clathrin- and caveolin-independent pathway. Plays a major role in the determination of host range restriction and virulence. Class I viral fusion protein. Responsible for penetration of the virus into the cell cytoplasm by mediating the fusion of the membrane of the endocytosed virus particle with the endosomal membrane. Low pH in endosomes induces an irreversible conformational change in HA2, releasing the fusion hydrophobic peptide. Several trimers are required to form a competent fusion pore. The sequence is that of Hemagglutinin from Influenza A virus (strain A/Kiev/59/1979 H1N1).